Reading from the N-terminus, the 688-residue chain is DNA-directed RNA polymerase subunit beta' (688 aa).

Zn(2+) is bound by residues Cys69, Cys71, Cys87, and Cys90. Mg(2+) contacts are provided by Asp489, Asp491, and Asp493.

Belongs to the RNA polymerase beta' chain family. RpoC1 subfamily. In terms of assembly, in plastids the minimal PEP RNA polymerase catalytic core is composed of four subunits: alpha, beta, beta', and beta''. When a (nuclear-encoded) sigma factor is associated with the core the holoenzyme is formed, which can initiate transcription. The cofactor is Mg(2+). Requires Zn(2+) as cofactor.

The protein localises to the plastid. Its subcellular location is the chloroplast. The enzyme catalyses RNA(n) + a ribonucleoside 5'-triphosphate = RNA(n+1) + diphosphate. In terms of biological role, DNA-dependent RNA polymerase catalyzes the transcription of DNA into RNA using the four ribonucleoside triphosphates as substrates. In Piper cenocladum (Ant piper), this protein is DNA-directed RNA polymerase subunit beta'.